A 303-amino-acid polypeptide reads, in one-letter code: tRNA-cytidine(32) 2-sulfurtransferase (303 aa).

Residues 45 to 50 carry the PP-loop motif motif; that stretch reads SGGKDS. [4Fe-4S] cluster-binding residues include cysteine 120, cysteine 123, and cysteine 211.

It belongs to the TtcA family. Homodimer. The cofactor is Mg(2+). It depends on [4Fe-4S] cluster as a cofactor.

The protein resides in the cytoplasm. The enzyme catalyses cytidine(32) in tRNA + S-sulfanyl-L-cysteinyl-[cysteine desulfurase] + AH2 + ATP = 2-thiocytidine(32) in tRNA + L-cysteinyl-[cysteine desulfurase] + A + AMP + diphosphate + H(+). Its pathway is tRNA modification. In terms of biological role, catalyzes the ATP-dependent 2-thiolation of cytidine in position 32 of tRNA, to form 2-thiocytidine (s(2)C32). The sulfur atoms are provided by the cysteine/cysteine desulfurase (IscS) system. The protein is tRNA-cytidine(32) 2-sulfurtransferase of Methylobacillus flagellatus (strain ATCC 51484 / DSM 6875 / VKM B-1610 / KT).